Reading from the N-terminus, the 425-residue chain is Serine--tRNA ligase (425 aa).

226 to 228 serves as a coordination point for L-serine; that stretch reads TSE. ATP is bound by residues 257–259 and Val-273; that span reads RRE. Glu-280 contacts L-serine. 344–347 is a binding site for ATP; that stretch reads ELTS. L-serine is bound at residue Thr-382.

It belongs to the class-II aminoacyl-tRNA synthetase family. Type-1 seryl-tRNA synthetase subfamily. In terms of assembly, homodimer. The tRNA molecule binds across the dimer.

Its subcellular location is the cytoplasm. The enzyme catalyses tRNA(Ser) + L-serine + ATP = L-seryl-tRNA(Ser) + AMP + diphosphate + H(+). It catalyses the reaction tRNA(Sec) + L-serine + ATP = L-seryl-tRNA(Sec) + AMP + diphosphate + H(+). It participates in aminoacyl-tRNA biosynthesis; selenocysteinyl-tRNA(Sec) biosynthesis; L-seryl-tRNA(Sec) from L-serine and tRNA(Sec): step 1/1. Catalyzes the attachment of serine to tRNA(Ser). Is also able to aminoacylate tRNA(Sec) with serine, to form the misacylated tRNA L-seryl-tRNA(Sec), which will be further converted into selenocysteinyl-tRNA(Sec). The protein is Serine--tRNA ligase of Mycobacterium avium (strain 104).